Here is a 344-residue protein sequence, read N- to C-terminus: Dihydroorotate dehydrogenase (quinone) (344 aa).

FMN-binding positions include 65–69 and Thr-89; that span reads AGFDK. Lys-69 is a substrate binding site. Residue 114-118 coordinates substrate; the sequence is NRMGF. Residues Asn-145 and Asn-178 each contribute to the FMN site. Asn-178 contributes to the substrate binding site. Catalysis depends on Ser-181, which acts as the Nucleophile. Asn-183 is a binding site for substrate. Residues Lys-215 and Thr-243 each coordinate FMN. Position 244–245 (244–245) interacts with substrate; that stretch reads NT. FMN is bound by residues Gly-269, Gly-298, and 319-320; that span reads YT.

Belongs to the dihydroorotate dehydrogenase family. Type 2 subfamily. In terms of assembly, monomer. The cofactor is FMN.

The protein localises to the cell membrane. The enzyme catalyses (S)-dihydroorotate + a quinone = orotate + a quinol. Its pathway is pyrimidine metabolism; UMP biosynthesis via de novo pathway; orotate from (S)-dihydroorotate (quinone route): step 1/1. Functionally, catalyzes the conversion of dihydroorotate to orotate with quinone as electron acceptor. The chain is Dihydroorotate dehydrogenase (quinone) from Clavibacter michiganensis subsp. michiganensis (strain NCPPB 382).